The chain runs to 339 residues: Ketol-acid reductoisomerase (NADP(+)) (339 aa).

The region spanning 1–182 (MRVYYDRDAD…GGGRAGIIET (182 aa)) is the KARI N-terminal Rossmann domain. NADP(+) contacts are provided by residues 24 to 27 (YGSQ), R48, S51, S53, and 83 to 86 (DELQ). The active site involves H108. Position 134 (G134) interacts with NADP(+). In terms of domain architecture, KARI C-terminal knotted spans 183 to 328 (TFKEECETDL…AKLRDMMPWI (146 aa)). Positions 191, 195, 227, and 231 each coordinate Mg(2+). S252 lines the substrate pocket.

Belongs to the ketol-acid reductoisomerase family. Mg(2+) is required as a cofactor.

The enzyme catalyses (2R)-2,3-dihydroxy-3-methylbutanoate + NADP(+) = (2S)-2-acetolactate + NADPH + H(+). It catalyses the reaction (2R,3R)-2,3-dihydroxy-3-methylpentanoate + NADP(+) = (S)-2-ethyl-2-hydroxy-3-oxobutanoate + NADPH + H(+). It participates in amino-acid biosynthesis; L-isoleucine biosynthesis; L-isoleucine from 2-oxobutanoate: step 2/4. The protein operates within amino-acid biosynthesis; L-valine biosynthesis; L-valine from pyruvate: step 2/4. Functionally, involved in the biosynthesis of branched-chain amino acids (BCAA). Catalyzes an alkyl-migration followed by a ketol-acid reduction of (S)-2-acetolactate (S2AL) to yield (R)-2,3-dihydroxy-isovalerate. In the isomerase reaction, S2AL is rearranged via a Mg-dependent methyl migration to produce 3-hydroxy-3-methyl-2-ketobutyrate (HMKB). In the reductase reaction, this 2-ketoacid undergoes a metal-dependent reduction by NADPH to yield (R)-2,3-dihydroxy-isovalerate. The polypeptide is Ketol-acid reductoisomerase (NADP(+)) (Bradyrhizobium diazoefficiens (strain JCM 10833 / BCRC 13528 / IAM 13628 / NBRC 14792 / USDA 110)).